Here is a 449-residue protein sequence, read N- to C-terminus: Packaging protein 1 (449 aa).

The interval 1 to 78 is disordered; the sequence is METRGRRPAA…PAKRGDMLDR (78 aa). Position 171 to 178 (171 to 178) interacts with ATP; sequence GPTGCGKS. The segment at 440–449 is DNA-binding; that stretch reads RAYRARKTPK.

The protein belongs to the adenoviridae packaging protein 1 family. In terms of assembly, homodimer. Part of a genome packaging complex composed of packaging proteins 1, 2 and 3; this complex specifically binds to the packaging sequence on the left end of viral genomic DNA and performs packaging of the viral genome. Interacts with protein 33K.

Its subcellular location is the virion. The protein resides in the host nucleus. It localises to the host nucleoplasm. It is found in the host nucleolus. Component of the packaging machinery which encapsidates the viral DNA into preformed capsids and transcriptional activator of the viral major late promoter (MLP). Binds, along with packaging proteins 2 and 3, to the specific packaging sequence on the left end of viral genomic DNA and displays ATPase activity thereby providing the power stroke of the packaging machinery. The activity of packaging protein IVa2 is stimulated by protein 33K which acts as a terminase. May be the protein that pumps DNA into the capsid powered by ATP hydrolysis. Specifically binds to the 5'-CG-3' nucleotides of the repeats making up the packaging sequence. Component of the DEF-A and DEF-B transcription factors that bind downstream elements of the major late promoter (MLP), and stimulate transcription from the MLP after initiation of viral DNA replication. DEF-A is a heterodimer packaging proteins 1 and 2 and DEF-B is a homodimer of packaging protein 1. The chain is Packaging protein 1 from Human adenovirus C serotype 5 (HAdV-5).